Here is a 776-residue protein sequence, read N- to C-terminus: Protein translocase subunit SecA 2 (776 aa).

ATP contacts are provided by residues Gln-80, Gly-98–Thr-102, and Asp-486.

The protein belongs to the SecA family. In terms of assembly, monomer and homodimer. Part of the essential Sec protein translocation apparatus which comprises SecA, SecYEG and auxiliary proteins SecDF. Other proteins may also be involved.

Its subcellular location is the cell membrane. The protein resides in the cytoplasm. The enzyme catalyses ATP + H2O + cellular proteinSide 1 = ADP + phosphate + cellular proteinSide 2.. Part of the Sec protein translocase complex. Interacts with the SecYEG preprotein conducting channel. Has a central role in coupling the hydrolysis of ATP to the transfer of proteins into and across the cell membrane, serving as an ATP-driven molecular motor driving the stepwise translocation of polypeptide chains across the membrane. This is Protein translocase subunit SecA 2 from Listeria monocytogenes serotype 1/2a (strain 10403S).